Reading from the N-terminus, the 650-residue chain is Fructose-1,6-bisphosphatase class 3 (650 aa).

The protein belongs to the FBPase class 3 family. It depends on Mn(2+) as a cofactor.

It carries out the reaction beta-D-fructose 1,6-bisphosphate + H2O = beta-D-fructose 6-phosphate + phosphate. It functions in the pathway carbohydrate biosynthesis; gluconeogenesis. The chain is Fructose-1,6-bisphosphatase class 3 from Finegoldia magna (strain ATCC 29328 / DSM 20472 / WAL 2508) (Peptostreptococcus magnus).